The primary structure comprises 175 residues: Myosin regulatory light chain 2, atrial isoform (175 aa).

A2 is subject to N-acetylalanine. 2 positions are modified to phosphoserine: S22 and S23. 3 EF-hand domains span residues 32–67 (AQIQEFKEAFSCIDQNRDGIICKSDLRETYSQLGKV), 102–137 (DPEEAILSAFRLFDPSGKGVVNKDQFKQLLLTQADK), and 138–173 (FSPAEVEQMFALTPMDLAGNIDYKSLCYIITHGDEK). Ca(2+)-binding residues include D45, N47, D49, and D56.

In terms of assembly, myosin is a hexamer of 2 heavy chains and 4 light chains.

In Sus scrofa (Pig), this protein is Myosin regulatory light chain 2, atrial isoform (MYL7).